Reading from the N-terminus, the 1031-residue chain is Putative glycine dehydrogenase (decarboxylating), mitochondrial (1031 aa).

A mitochondrion-targeting transit peptide spans 1-49; the sequence is MFDSFMKRNQLALIMFRACSKLQYHGVNTSLSRHLFLAKRNLSISSACL. Lysine 783 is subject to N6-(pyridoxal phosphate)lysine.

The protein belongs to the GcvP family. The cofactor is pyridoxal 5'-phosphate.

Its subcellular location is the mitochondrion. The catalysed reaction is N(6)-[(R)-lipoyl]-L-lysyl-[glycine-cleavage complex H protein] + glycine + H(+) = N(6)-[(R)-S(8)-aminomethyldihydrolipoyl]-L-lysyl-[glycine-cleavage complex H protein] + CO2. In terms of biological role, the glycine cleavage system catalyzes the degradation of glycine. The P protein binds the alpha-amino group of glycine through its pyridoxal phosphate cofactor; CO(2) is released and the remaining methylamine moiety is then transferred to the lipoamide cofactor of the H protein. This is Putative glycine dehydrogenase (decarboxylating), mitochondrial (gcv2) from Schizosaccharomyces pombe (strain 972 / ATCC 24843) (Fission yeast).